The primary structure comprises 1603 residues: Vitellogenin-4 (1603 aa).

The signal sequence occupies residues 1 to 15; it reads MKSIIIASLVALAIA. The region spanning 24 to 685 is the Vitellogenin domain; it reads FSPKSEYVYK…EKNAFLPKEV (662 aa). N-linked (GlcNAc...) asparagine glycosylation occurs at asparagine 1266. Residues 1306–1475 form the VWFD domain; the sequence is ATCKVDQSEV…SYLLKNEECE (170 aa). Disulfide bonds link cysteine 1308–cysteine 1438 and cysteine 1330–cysteine 1474.

In terms of tissue distribution, expressed in the intestine of adult hermaphrodites.

It localises to the secreted. Precursor of the egg-yolk proteins that are sources of nutrients during embryonic development. Together with other vitellogenins, may play a role in modulating life-span, acting via induction of autophagy and lysosomal lipolysis. This chain is Vitellogenin-4 (vit-4), found in Caenorhabditis elegans.